The chain runs to 525 residues: GMP synthase [glutamine-hydrolyzing] (525 aa).

The region spanning 9–207 (RILILDFGSQ…VLDICACEAL (199 aa)) is the Glutamine amidotransferase type-1 domain. C86 serves as the catalytic Nucleophile. Catalysis depends on residues H181 and E183. The GMPS ATP-PPase domain occupies 208–400 (WTPATIIEDA…LGLPYDMLYR (193 aa)). 235-241 (SGGVDSS) contributes to the ATP binding site.

Homodimer.

It carries out the reaction XMP + L-glutamine + ATP + H2O = GMP + L-glutamate + AMP + diphosphate + 2 H(+). Its pathway is purine metabolism; GMP biosynthesis; GMP from XMP (L-Gln route): step 1/1. Functionally, catalyzes the synthesis of GMP from XMP. This is GMP synthase [glutamine-hydrolyzing] from Yersinia enterocolitica serotype O:8 / biotype 1B (strain NCTC 13174 / 8081).